The sequence spans 1274 residues: DENN domain-containing protein 3 (1274 aa).

The tract at residues 65-108 is disordered; that stretch reads GQVPGASCALGKGRRRSFRKKREKPRMEPWKSHPGDSKGPDSED. In terms of domain architecture, uDENN spans 75-245; sequence GKGRRRSFRK…LIPSPPPGPL (171 aa). Positions 76 to 88 are enriched in basic residues; it reads KGRRRSFRKKREK. The span at 89–105 shows a compositional bias: basic and acidic residues; the sequence is PRMEPWKSHPGDSKGPD. The cDENN domain occupies 268–400; the sequence is IVDLDLHLPL…PLLLAQTFIQ (133 aa). The dDENN domain occupies 402-506; that stretch reads VQSLQLHPDL…KARLNGRMDA (105 aa). Positions 520–970 are linker; that stretch reads RIDRMLISPR…KHKINPSAGE (451 aa). Phosphoserine; by ULK1 is present on residues Ser-554 and Ser-572. The residue at position 940 (Tyr-940) is a Phosphotyrosine. 7 WD repeats span residues 975-1013, 1019-1055, 1059-1099, 1103-1140, 1146-1181, 1186-1228, and 1234-1273; these read AIEV…VFDA, HQHC…IINV, SCNK…AWNV, RVIS…TPQG, LKHP…MWSL, QPPQ…IYVM, and TVEK…IWKV.

In terms of assembly, forms oligomers. Interacts with 6 of the 7 known isoforms of 14-3-3 proteins.

It localises to the cytoplasm. Functionally, guanine nucleotide exchange factor (GEF) activating Rab12. Promotes the exchange of GDP to GTP, converting inactive GDP-bound Rab12 into its active GTP-bound form. Regulates autophagy in response to starvation through Rab12 activation. Starvation leads to ULK1/2-dependent phosphorylation of Ser-554 and Ser-572, which in turn allows recruitment of 14-3-3 adapter proteins and leads to up-regulation of GEF activity towards Rab12. Also plays a role in protein transport from recycling endosomes to lysosomes, regulating, for instance, the degradation of the transferrin receptor and of the amino acid transporter PAT4. Starvation also induces phosphorylation at Tyr-940, which leads to up-regulated GEF activity and initiates autophagy. This is DENN domain-containing protein 3 (Dennd3) from Mus musculus (Mouse).